The sequence spans 121 residues: Large ribosomal subunit protein bL12 (121 aa).

This sequence belongs to the bacterial ribosomal protein bL12 family. Homodimer. Part of the ribosomal stalk of the 50S ribosomal subunit. Forms a multimeric L10(L12)X complex, where L10 forms an elongated spine to which 2 to 4 L12 dimers bind in a sequential fashion. Binds GTP-bound translation factors.

Forms part of the ribosomal stalk which helps the ribosome interact with GTP-bound translation factors. Is thus essential for accurate translation. This is Large ribosomal subunit protein bL12 from Vibrio cholerae serotype O1 (strain ATCC 39541 / Classical Ogawa 395 / O395).